Consider the following 3373-residue polypeptide: Intermembrane lipid transfer protein vps13A (3373 aa).

In terms of domain architecture, Chorein N-terminal spans 3–119; it reads FEGLVSDVLS…QAELKKKKLE (117 aa). 5 disordered regions span residues 818-858, 1028-1096, 1259-1304, 1648-1729, and 1872-1913; these read PKAT…VNSS, VPIN…KTAS, NNNK…DLEK, DPSI…EEEK, and QKKR…GKKD. Residues 823-839 are compositionally biased toward polar residues; sequence TPINDSNSPSSVSPKLI. 2 stretches are compositionally biased toward low complexity: residues 840–858 and 1048–1066; these read STSPHSFSSSSAPVDVNSS and SSPNQQSPNQQSPNQQSPQ. 2 stretches are compositionally biased toward basic and acidic residues: residues 1263–1274 and 1288–1304; these read SIEKSKSIDSKL and RSDDNHEKSERELDLEK. Composition is skewed to low complexity over residues 1659–1685, 1695–1716, and 1884–1898; these read QQQQQQSSSSSFIPSQQQQQQKVRSQS, SSIGGKESKTISSSISNNSLSS, and SSSTSLPSLNKSTNS. Polar residues predominate over residues 1899 to 1909; it reads FQTSTSGNSNS. In terms of domain architecture, SHR-BD spans 2405 to 2706; that stretch reads TLSFYCQYWL…CYGWDEPSAE (302 aa). A disordered region spans residues 2909–2933; sequence RGNNASNNNNNNGMTSSQMRQSGSG. Over residues 2911-2920 the composition is skewed to low complexity; sequence NNASNNNNNN.

Belongs to the VPS13 family.

It is found in the membrane. Functionally, mediates the transfer of lipids between membranes at organelle contact sites. The polypeptide is Intermembrane lipid transfer protein vps13A (vps13A) (Dictyostelium discoideum (Social amoeba)).